The following is a 242-amino-acid chain: LexA repressor (242 aa).

A DNA-binding region (H-T-H motif) is located at residues 26–46 (FEEMKAALNLKSKSGIHRLIS). Residues Ser163 and Lys201 each act as for autocatalytic cleavage activity in the active site.

The protein belongs to the peptidase S24 family. As to quaternary structure, homodimer.

It catalyses the reaction Hydrolysis of Ala-|-Gly bond in repressor LexA.. In terms of biological role, represses a number of genes involved in the response to DNA damage (SOS response), including recA and lexA. In the presence of single-stranded DNA, RecA interacts with LexA causing an autocatalytic cleavage which disrupts the DNA-binding part of LexA, leading to derepression of the SOS regulon and eventually DNA repair. This is LexA repressor from Granulibacter bethesdensis (strain ATCC BAA-1260 / CGDNIH1).